We begin with the raw amino-acid sequence, 80 residues long: MAFLKKSLFLVLFLGIVSLSICEEEKREGEEEEKQEEENEELSEEELREKRAWLDKLKNLGKVVGKVALGVVQNYLNPRQ.

A signal peptide spans 1 to 22; that stretch reads MAFLKKSLFLVLFLGIVSLSIC. Residues 23–49 constitute a propeptide that is removed on maturation; that stretch reads EEEKREGEEEEKQEEENEELSEEELRE.

The protein belongs to the frog skin active peptide (FSAP) family. Dermaseptin subfamily. As to expression, expressed by the skin glands.

The protein localises to the secreted. Has antibacterial activity. The polypeptide is Raniseptin-5 (Boana raniceps (Chaco tree frog)).